A 308-amino-acid chain; its full sequence is Acetyl-coenzyme A carboxylase carboxyl transferase subunit beta (308 aa).

The 263-residue stretch at 46 to 308 (LWVKCPDTGE…LMMGRGLKAA (263 aa)) folds into the CoA carboxyltransferase N-terminal domain.

Belongs to the AccD/PCCB family. Acetyl-CoA carboxylase is a heterohexamer composed of biotin carboxyl carrier protein (AccB), biotin carboxylase (AccC) and two subunits each of ACCase subunit alpha (AccA) and ACCase subunit beta (AccD).

Its subcellular location is the cytoplasm. It carries out the reaction N(6)-carboxybiotinyl-L-lysyl-[protein] + acetyl-CoA = N(6)-biotinyl-L-lysyl-[protein] + malonyl-CoA. It participates in lipid metabolism; malonyl-CoA biosynthesis; malonyl-CoA from acetyl-CoA: step 1/1. Component of the acetyl coenzyme A carboxylase (ACC) complex. Biotin carboxylase (BC) catalyzes the carboxylation of biotin on its carrier protein (BCCP) and then the CO(2) group is transferred by the transcarboxylase to acetyl-CoA to form malonyl-CoA. The chain is Acetyl-coenzyme A carboxylase carboxyl transferase subunit beta from Caulobacter sp. (strain K31).